Consider the following 216-residue polypeptide: Type-4 uracil-DNA glycosylase (216 aa).

Cysteine 14 and cysteine 17 together coordinate [4Fe-4S] cluster. Residues 41 to 43, phenylalanine 55, and asparagine 82 contribute to the uracil site; that span reads GEA. The [4Fe-4S] cluster site is built by cysteine 86 and cysteine 102. Histidine 164 contacts uracil.

It belongs to the uracil-DNA glycosylase (UDG) superfamily. Type 4 (UDGa) family. Interacts with the sliding clamp PCNA3 subunit.

It catalyses the reaction Hydrolyzes single-stranded DNA or mismatched double-stranded DNA and polynucleotides, releasing free uracil.. Its function is as follows. Removes uracil bases that are present in DNA as a result of either deamination of cytosine or misincorporation of dUMP instead of dTMP. Can remove uracil from double-stranded DNA containing either a U/G or U/A base pair as well as from single-stranded DNA. This Saccharolobus solfataricus (strain ATCC 35092 / DSM 1617 / JCM 11322 / P2) (Sulfolobus solfataricus) protein is Type-4 uracil-DNA glycosylase.